Here is a 263-residue protein sequence, read N- to C-terminus: Phosphatidylglycerol--prolipoprotein diacylglyceryl transferase (263 aa).

4 consecutive transmembrane segments (helical) span residues valine 6–isoleucine 26, leucine 50–tyrosine 70, threonine 85–isoleucine 105, and isoleucine 112–glycine 132. Arginine 133 is an a 1,2-diacyl-sn-glycero-3-phospho-(1'-sn-glycerol) binding site. The next 3 membrane-spanning stretches (helical) occupy residues leucine 169–leucine 189, glycine 197–phenylalanine 217, and methionine 233–leucine 253.

Belongs to the Lgt family.

Its subcellular location is the cell membrane. It catalyses the reaction L-cysteinyl-[prolipoprotein] + a 1,2-diacyl-sn-glycero-3-phospho-(1'-sn-glycerol) = an S-1,2-diacyl-sn-glyceryl-L-cysteinyl-[prolipoprotein] + sn-glycerol 1-phosphate + H(+). It participates in protein modification; lipoprotein biosynthesis (diacylglyceryl transfer). Functionally, catalyzes the transfer of the diacylglyceryl group from phosphatidylglycerol to the sulfhydryl group of the N-terminal cysteine of a prolipoprotein, the first step in the formation of mature lipoproteins. The chain is Phosphatidylglycerol--prolipoprotein diacylglyceryl transferase from Wolbachia pipientis subsp. Culex pipiens (strain wPip).